The following is a 316-amino-acid chain: Cilia-and flagella-associated protein 96 (316 aa).

Residues 220–242 form a disordered region; that stretch reads EEKKEVSFKPFKPSSPGKKAGGM. Positions 227 to 237 are enriched in low complexity; it reads FKPFKPSSPGK.

This sequence belongs to the CFAP96 family.

Its subcellular location is the cytoplasm. The protein localises to the cytoskeleton. It is found in the microtubule organizing center. It localises to the centrosome. The protein is Cilia-and flagella-associated protein 96 (Cfap96) of Mus musculus (Mouse).